Reading from the N-terminus, the 1434-residue chain is MGARASVLSGGELDKWEKIRLRPGGKKKYQLKHIVWASRELERFAINPGLLETSEGCRQILGQLQPSLKTGSEEIRSLYNTVATLYCVHQKIEVKDTKEALDKIEEEQNKSKKKAQQTAADTGNSSQVSQNYPIVQNLQGQMVHQPISPRTLNAWVKVVEEKAFSPEVIPMFSALAEGATPQDLNTMLNTVGGHQAAMQMLKETINEEAAEWDRLHPVHAGPIAPGQMREPRGSDIAGTTSTLQEQIGWMTNNPPIPVGEIYKRWIILGLNKIVRMYSPTSILDIRQGPKEPFRDYVDRFYKTLRAEQASQDVKNWMTETLLVQNANPDCKTILKALGPAATLEEMMTACQGVGGPGHKARVLAEAMSQVNSVTVMMQKGNFKNQRKTVKCFNCGKEGHIAKNCRAPRKKGCWKCGREGHQMKDCTERQANFLREDLAFPQGKAREFSSEQTRANSPTSRELRVWGRDNNSPSEAGADRQGTVSFNLPQITLWQRPIVTIKIGGQLKEALLDTGADDTVLEEMNLPGRWKPKMIGGIGGFIKVRQYDQILIEICGHKAIGTVLVGPTPVNIIGRNLLTQLGCTLNFPISPIETVPVKLKPGMDGPKVKQWPLTEEKIKVLIEICTEMEKEGKISKVGPENPYNTPVFAIKKKDSTKWRKLVDFRELNKRTQDFWEVQLGIPHPAGLKKKKSVTVLDVGDAYFSVPLDKDFRKYTAFTIPSINNETPGIRYQYNVLPQGWKGSPAIFQSSMTKILEPFRKQNPDIVIYQYMDDLYVGSDLEIGQHRTKIEELRQHLLRWGFTTPDKKHQKEPPFLWMGYELHPDKWTVQPIMLPEKDSWTVNDIQKLVGKLNWASQIYAGIKVKNLCKLLRGTKALTEVIPLTEEAELELAENREILKEPVHGVYYDPSKDLVAELQKQGQGQWTYQIYQEPFKNLKTGKYARMRGAHTNDVKQLTEAVQKITQESIVIWGKTPKFKLPIQKETWEAWWTEYWQATWIPEWEFVNTPPLVKLWYQLEKDPIVGAETFYVDGAANRETKLGKAGYVTDRGRQKVVSLTDTTNQKTELQAIHLALQDSGLEVNIVTDSQYALGIIQAQPDKSESELVSQIIEQLIKKEKVYLAWVPAHKGIGGNEQVDKLVSAGIRKVLFLDGIDKAQEEHEKYHSNWRAMASDFNLPPVVAKEIVASCDKCQLKGEAMHGQVDCSPGIWQLDCTHLEGKIILVAVHVASGYIEAEVIPAETGQETAYFILKLAGRWPVKTIHTDNGSNFTSTTVKAACWWAGIKQEFGIPYNPQSQGVVESMNNELKKIIGQVRDQAEHLKTAVQMAVFIHNFKRKGGIGGYSAGERIVDIIATDIQTKELQKQITKIQNFRVYYRDSREPLWKGPAKLLWKGEGAVVIQDNSDIKVVPRRKAKIIRDYGKQMAGDDCVASRQDED.

The N-myristoyl glycine; by host moiety is linked to residue Gly-2. An interaction with Gp41 region spans residues 7–31 (VLSGGELDKWEKIRLRPGGKKKYQL). The tract at residues 8–43 (LSGGELDKWEKIRLRPGGKKKYQLKHIVWASRELER) is interaction with host CALM1. Residues 12–19 (ELDKWEKI) form an interaction with host AP3D1 region. Residues 14 to 33 (DKWEKIRLRPGGKKKYQLKH) form an interaction with membrane phosphatidylinositol 4,5-bisphosphate and RNA region. The short motif at 16–22 (WEKIRLR) is the Nuclear export signal element. The Nuclear localization signal signature appears at 26 to 32 (KKKYQLK). An interaction with membrane phosphatidylinositol 4,5-bisphosphate region spans residues 73 to 77 (EEIRS). Positions 106 to 128 (EEQNKSKKKAQQTAADTGNSSQV) are disordered. Residues 116-128 (QQTAADTGNSSQV) show a composition bias toward polar residues. Tyr-132 is modified (phosphotyrosine; by host). The segment at 189 to 227 (NTVGGHQAAMQMLKETINEEAAEWDRLHPVHAGPIAPGQ) is interaction with human PPIA/CYPA and NUP153. Residues 277 to 363 (YSPTSILDIR…GGPGHKARVL (87 aa)) are dimerization/Multimerization of capsid protein p24. CCHC-type zinc fingers lie at residues 389–406 (VKCF…NCRA) and 410–427 (KGCW…DCTE). The tract at residues 443-480 (KAREFSSEQTRANSPTSRELRVWGRDNNSPSEAGADRQ) is disordered. Positions 449–459 (SEQTRANSPTS) are enriched in polar residues. The interval 488–492 (PQITL) is dimerization of protease. In terms of domain architecture, Peptidase A2 spans 507 to 576 (KEALLDTGAD…TPVNIIGRNL (70 aa)). The For protease activity; shared with dimeric partner role is filled by Asp-512. Dimerization of protease stretches follow at residues 536–542 (GIGGFIK) and 575–587 (NLLT…LNFP). In terms of domain architecture, Reverse transcriptase spans 630–820 (EGKISKVGPE…PPFLWMGYEL (191 aa)). 3 residues coordinate Mg(2+): Asp-696, Asp-771, and Asp-772. The segment at 813-821 (FLWMGYELH) is RT 'primer grip'. The Tryptophan repeat motif motif lies at 984–1000 (WEAWWTEYWQATWIPEW). Residues 1020–1143 (IVGAETFYVD…VDKLVSAGIR (124 aa)) form the RNase H type-1 domain. Mg(2+)-binding residues include Asp-1029, Glu-1064, Asp-1084, and Asp-1135. The segment at 1149–1190 (DGIDKAQEEHEKYHSNWRAMASDFNLPPVVAKEIVASCDKCQ) adopts an Integrase-type zinc-finger fold. His-1158, His-1162, Cys-1186, and Cys-1189 together coordinate Zn(2+). The 151-residue stretch at 1200–1350 (VDCSPGIWQL…SAGERIVDII (151 aa)) folds into the Integrase catalytic domain. Asp-1210, Asp-1262, and Glu-1298 together coordinate Mg(2+). The integrase-type DNA-binding region spans 1369-1416 (FRVYYRDSREPLWKGPAKLLWKGEGAVVIQDNSDIKVVPRRKAKIIRD).

As to quaternary structure, homotrimer; further assembles as hexamers of trimers. Interacts with gp41 (via C-terminus). Interacts with host CALM1; this interaction induces a conformational change in the Matrix protein, triggering exposure of the myristate group. Interacts with host AP3D1; this interaction allows the polyprotein trafficking to multivesicular bodies during virus assembly. Part of the pre-integration complex (PIC) which is composed of viral genome, matrix protein, Vpr and integrase. Homodimer; the homodimer further multimerizes as homohexamers or homopentamers. Interacts with human PPIA/CYPA; This interaction stabilizes the capsid. Interacts with human NUP153. Interacts with host PDZD8; this interaction stabilizes the capsid. Interacts with monkey TRIM5; this interaction destabilizes the capsid. In terms of assembly, homodimer, whose active site consists of two apposed aspartic acid residues. As to quaternary structure, heterodimer of p66 RT and p51 RT (RT p66/p51). Heterodimerization of RT is essential for DNA polymerase activity. The overall folding of the subdomains is similar in p66 RT and p51 RT but the spatial arrangements of the subdomains are dramatically different. Homotetramer; may further associate as a homohexadecamer. Part of the pre-integration complex (PIC) which is composed of viral genome, matrix protein, Vpr and integrase. Interacts with human SMARCB1/INI1 and human PSIP1/LEDGF isoform 1. Interacts with human KPNA3; this interaction might play a role in nuclear import of the pre-integration complex. Interacts with human NUP153; this interaction might play a role in nuclear import of the pre-integration complex. Requires Mg(2+) as cofactor. Post-translationally, specific enzymatic cleavages by the viral protease yield mature proteins. The protease is released by autocatalytic cleavage. The polyprotein is cleaved during and after budding, this process is termed maturation. Proteolytic cleavage of p66 RT removes the RNase H domain to yield the p51 RT subunit. Nucleocapsid protein p7 might be further cleaved after virus entry. In terms of processing, tyrosine phosphorylated presumably in the virion by a host kinase. Phosphorylation is apparently not a major regulator of membrane association. Phosphorylated possibly by host MAPK1; this phosphorylation is necessary for Pin1-mediated virion uncoating. Post-translationally, methylated by host PRMT6, impairing its function by reducing RNA annealing and the initiation of reverse transcription.

Its subcellular location is the host cell membrane. It localises to the host endosome. It is found in the host multivesicular body. The protein resides in the virion membrane. The protein localises to the host nucleus. Its subcellular location is the host cytoplasm. It localises to the virion. It catalyses the reaction Specific for a P1 residue that is hydrophobic, and P1' variable, but often Pro.. The catalysed reaction is Endohydrolysis of RNA in RNA/DNA hybrids. Three different cleavage modes: 1. sequence-specific internal cleavage of RNA. Human immunodeficiency virus type 1 and Moloney murine leukemia virus enzymes prefer to cleave the RNA strand one nucleotide away from the RNA-DNA junction. 2. RNA 5'-end directed cleavage 13-19 nucleotides from the RNA end. 3. DNA 3'-end directed cleavage 15-20 nucleotides away from the primer terminus.. It carries out the reaction 3'-end directed exonucleolytic cleavage of viral RNA-DNA hybrid.. The enzyme catalyses DNA(n) + a 2'-deoxyribonucleoside 5'-triphosphate = DNA(n+1) + diphosphate. Its activity is regulated as follows. Protease: The viral protease is inhibited by many synthetic protease inhibitors (PIs), such as amprenavir, atazanavir, indinavir, loprinavir, nelfinavir, ritonavir and saquinavir. Use of protease inhibitors in tritherapy regimens permit more ambitious therapeutic strategies. Reverse transcriptase/ribonuclease H: RT can be inhibited either by nucleoside RT inhibitors (NRTIs) or by non nucleoside RT inhibitors (NNRTIs). NRTIs act as chain terminators, whereas NNRTIs inhibit DNA polymerization by binding a small hydrophobic pocket near the RT active site and inducing an allosteric change in this region. Classical NRTIs are abacavir, adefovir (PMEA), didanosine (ddI), lamivudine (3TC), stavudine (d4T), tenofovir (PMPA), zalcitabine (ddC), and zidovudine (AZT). Classical NNRTIs are atevirdine (BHAP U-87201E), delavirdine, efavirenz (DMP-266), emivirine (I-EBU), and nevirapine (BI-RG-587). The tritherapies used as a basic effective treatment of AIDS associate two NRTIs and one NNRTI. Its function is as follows. Mediates, with Gag polyprotein, the essential events in virion assembly, including binding the plasma membrane, making the protein-protein interactions necessary to create spherical particles, recruiting the viral Env proteins, and packaging the genomic RNA via direct interactions with the RNA packaging sequence (Psi). Gag-Pol polyprotein may regulate its own translation, by the binding genomic RNA in the 5'-UTR. At low concentration, the polyprotein would promote translation, whereas at high concentration, the polyprotein would encapsidate genomic RNA and then shut off translation. In terms of biological role, targets the polyprotein to the plasma membrane via a multipartite membrane-binding signal, that includes its myristoylated N-terminus. Matrix protein is part of the pre-integration complex. Implicated in the release from host cell mediated by Vpu. Binds to RNA. Functionally, forms the conical core that encapsulates the genomic RNA-nucleocapsid complex in the virion. Most core are conical, with only 7% tubular. The core is constituted by capsid protein hexamer subunits. The core is disassembled soon after virion entry. Host restriction factors such as TRIM5-alpha or TRIMCyp bind retroviral capsids and cause premature capsid disassembly, leading to blocks in reverse transcription. Capsid restriction by TRIM5 is one of the factors which restricts HIV-1 to the human species. Host PIN1 apparently facilitates the virion uncoating. On the other hand, interactions with PDZD8 or CYPA stabilize the capsid. Encapsulates and protects viral dimeric unspliced genomic RNA (gRNA). Binds these RNAs through its zinc fingers. Acts as a nucleic acid chaperone which is involved in rearangement of nucleic acid secondary structure during gRNA retrotranscription. Also facilitates template switch leading to recombination. As part of the polyprotein, participates in gRNA dimerization, packaging, tRNA incorporation and virion assembly. Its function is as follows. Aspartyl protease that mediates proteolytic cleavages of Gag and Gag-Pol polyproteins during or shortly after the release of the virion from the plasma membrane. Cleavages take place as an ordered, step-wise cascade to yield mature proteins. This process is called maturation. Displays maximal activity during the budding process just prior to particle release from the cell. Also cleaves Nef and Vif, probably concomitantly with viral structural proteins on maturation of virus particles. Hydrolyzes host EIF4GI and PABP1 in order to shut off the capped cellular mRNA translation. The resulting inhibition of cellular protein synthesis serves to ensure maximal viral gene expression and to evade host immune response. Also mediates cleavage of host YTHDF3. Mediates cleavage of host CARD8, thereby activating the CARD8 inflammasome, leading to the clearance of latent HIV-1 in patient CD4(+) T-cells after viral reactivation; in contrast, HIV-1 can evade CARD8-sensing when its protease remains inactive in infected cells prior to viral budding. In terms of biological role, multifunctional enzyme that converts the viral RNA genome into dsDNA in the cytoplasm, shortly after virus entry into the cell. This enzyme displays a DNA polymerase activity that can copy either DNA or RNA templates, and a ribonuclease H (RNase H) activity that cleaves the RNA strand of RNA-DNA heteroduplexes in a partially processive 3' to 5' endonucleasic mode. Conversion of viral genomic RNA into dsDNA requires many steps. A tRNA(3)-Lys binds to the primer-binding site (PBS) situated at the 5'-end of the viral RNA. RT uses the 3' end of the tRNA primer to perform a short round of RNA-dependent minus-strand DNA synthesis. The reading proceeds through the U5 region and ends after the repeated (R) region which is present at both ends of viral RNA. The portion of the RNA-DNA heteroduplex is digested by the RNase H, resulting in a ssDNA product attached to the tRNA primer. This ssDNA/tRNA hybridizes with the identical R region situated at the 3' end of viral RNA. This template exchange, known as minus-strand DNA strong stop transfer, can be either intra- or intermolecular. RT uses the 3' end of this newly synthesized short ssDNA to perform the RNA-dependent minus-strand DNA synthesis of the whole template. RNase H digests the RNA template except for two polypurine tracts (PPTs) situated at the 5'-end and near the center of the genome. It is not clear if both polymerase and RNase H activities are simultaneous. RNase H probably can proceed both in a polymerase-dependent (RNA cut into small fragments by the same RT performing DNA synthesis) and a polymerase-independent mode (cleavage of remaining RNA fragments by free RTs). Secondly, RT performs DNA-directed plus-strand DNA synthesis using the PPTs that have not been removed by RNase H as primers. PPTs and tRNA primers are then removed by RNase H. The 3' and 5' ssDNA PBS regions hybridize to form a circular dsDNA intermediate. Strand displacement synthesis by RT to the PBS and PPT ends produces a blunt ended, linear dsDNA copy of the viral genome that includes long terminal repeats (LTRs) at both ends. Functionally, catalyzes viral DNA integration into the host chromosome, by performing a series of DNA cutting and joining reactions. This enzyme activity takes place after virion entry into a cell and reverse transcription of the RNA genome in dsDNA. The first step in the integration process is 3' processing. This step requires a complex comprising the viral genome, matrix protein, Vpr and integrase. This complex is called the pre-integration complex (PIC). The integrase protein removes 2 nucleotides from each 3' end of the viral DNA, leaving recessed CA OH's at the 3' ends. In the second step, the PIC enters cell nucleus. This process is mediated through integrase and Vpr proteins, and allows the virus to infect a non dividing cell. This ability to enter the nucleus is specific of lentiviruses, other retroviruses cannot and rely on cell division to access cell chromosomes. In the third step, termed strand transfer, the integrase protein joins the previously processed 3' ends to the 5' ends of strands of target cellular DNA at the site of integration. The 5'-ends are produced by integrase-catalyzed staggered cuts, 5 bp apart. A Y-shaped, gapped, recombination intermediate results, with the 5'-ends of the viral DNA strands and the 3' ends of target DNA strands remaining unjoined, flanking a gap of 5 bp. The last step is viral DNA integration into host chromosome. This involves host DNA repair synthesis in which the 5 bp gaps between the unjoined strands are filled in and then ligated. Since this process occurs at both cuts flanking the HIV genome, a 5 bp duplication of host DNA is produced at the ends of HIV-1 integration. Alternatively, Integrase may catalyze the excision of viral DNA just after strand transfer, this is termed disintegration. The polypeptide is Gag-Pol polyprotein (gag-pol) (Homo sapiens (Human)).